The chain runs to 108 residues: Transcription factor AmrZ (108 aa).

Functions both as a transcriptional activator and a repressor of multiple genes encoding virulence factors as well as genes involved in environmental adaptation. Represses genes involved in iron homeostasis. Modulates intracellular levels of c-di-GMP which in turn regulates swimming motility and biofilm formation. The sequence is that of Transcription factor AmrZ from Pseudomonas ogarae (strain DSM 112162 / CECT 30235 / F113).